The primary structure comprises 468 residues: UDP-N-acetylmuramoyl-L-alanine--L-glutamate ligase (468 aa).

122-128 (GTKGKST) lines the ATP pocket.

It belongs to the MurCDEF family. MurD2 subfamily.

The protein localises to the cytoplasm. The catalysed reaction is UDP-N-acetyl-alpha-D-muramoyl-L-alanine + L-glutamate + ATP = UDP-N-acetyl-alpha-D-muramoyl-L-alanyl-L-glutamate + ADP + phosphate + H(+). Its pathway is cell wall biogenesis; peptidoglycan biosynthesis. Cell wall formation. Catalyzes the addition of L-glutamate to the nucleotide precursor UDP-N-acetylmuramoyl-L-alanine. The polypeptide is UDP-N-acetylmuramoyl-L-alanine--L-glutamate ligase (Xanthomonas euvesicatoria pv. vesicatoria (strain 85-10) (Xanthomonas campestris pv. vesicatoria)).